The sequence spans 101 residues: Ubiquitin-related modifier 1 (101 aa).

The residue at position 101 (G101) is a 1-thioglycine. Residue G101 forms a Glycyl lysine isopeptide (Gly-Lys) (interchain with K-? in acceptor proteins) linkage.

It belongs to the URM1 family. Component of a complex at least composed of URM1, CTU2/NCS2 and CTU1/ATPBD3. Post-translationally, C-terminal thiocarboxylation occurs in 2 steps, it is first acyl-adenylated (-COAMP) via the hesA/moeB/thiF part of MOCS3, then thiocarboxylated (-COSH) via the rhodanese domain of MOCS3.

It is found in the cytoplasm. The protein operates within tRNA modification; 5-methoxycarbonylmethyl-2-thiouridine-tRNA biosynthesis. Functionally, acts as a sulfur carrier required for 2-thiolation of mcm(5)S(2)U at tRNA wobble positions of cytosolic tRNA(Lys), tRNA(Glu) and tRNA(Gln). Serves as sulfur donor in tRNA 2-thiolation reaction by being thiocarboxylated (-COSH) at its C-terminus by MOCS3. The sulfur is then transferred to tRNA to form 2-thiolation of mcm(5)S(2)U. Also acts as a ubiquitin-like protein (UBL) that is covalently conjugated via an isopeptide bond to lysine residues of target proteins such as MOCS3, ATPBD3, CTU2, USP15 and CAS. The thiocarboxylated form serves as substrate for conjugation and oxidative stress specifically induces the formation of UBL-protein conjugates. The sequence is that of Ubiquitin-related modifier 1 from Homo sapiens (Human).